The primary structure comprises 252 residues: 3-deoxy-manno-octulosonate cytidylyltransferase (252 aa).

It belongs to the KdsB family.

The protein localises to the cytoplasm. The enzyme catalyses 3-deoxy-alpha-D-manno-oct-2-ulosonate + CTP = CMP-3-deoxy-beta-D-manno-octulosonate + diphosphate. It functions in the pathway nucleotide-sugar biosynthesis; CMP-3-deoxy-D-manno-octulosonate biosynthesis; CMP-3-deoxy-D-manno-octulosonate from 3-deoxy-D-manno-octulosonate and CTP: step 1/1. Its pathway is bacterial outer membrane biogenesis; lipopolysaccharide biosynthesis. Its function is as follows. Activates KDO (a required 8-carbon sugar) for incorporation into bacterial lipopolysaccharide in Gram-negative bacteria. This is 3-deoxy-manno-octulosonate cytidylyltransferase from Vibrio campbellii (strain ATCC BAA-1116).